A 676-amino-acid chain; its full sequence is Electrogenic aspartate/glutamate antiporter SLC25A12, mitochondrial (676 aa).

Ala2 is subject to N-acetylalanine. The segment at 2-293 is regulatory N-terminal domain; it reads AVKVHTTKRG…TLADIERIAP (292 aa). The Mitochondrial intermembrane portion of the chain corresponds to 2-328; it reads AVKVHTTKRG…WLQIAESAYR (327 aa). Asp65, Thr67, Asp69, Leu71, and Glu76 together coordinate Ca(2+). EF-hand domains are found at residues 65–76, 86–121, 125–155, and 157–192; these read DQTKDGLISYQE, APDSMFIVAFQLFDKSGNGEVTFENVKEIFGQTIIH, PFNWDCEFIRLHFGHNRKKHLNYVEFTQFLQ, and LQLEHARQAFALKDKSKSGMISGLDFSDVMVTIRSH. The tract at residues 294–309 is linker loop domain; it reads LAEGALPYNLAELQRQ. Residues 319–611 form a carrier domain region; sequence WLQIAESAYR…RWFYIDFGGL (293 aa). Solcar repeat units lie at residues 323 to 415, 423 to 507, and 515 to 603; these read AESA…VRDK, IPLP…CKLL, and VGGI…LQRW. Residues 329 to 346 form a helical membrane-spanning segment; that stretch reads FTLGSVAGAVGATAVYPI. The Mitochondrial matrix segment spans residues 347-389; the sequence is DLVKTRMQNQRGTGSVVGELMYKNSFDCFKKVLRYEGFFGLYR. Residues 390–409 traverse the membrane as a helical segment; the sequence is GLIPQLIGVAPEKAIKLTVN. The Mitochondrial intermembrane portion of the chain corresponds to 410–432; the sequence is DFVRDKFTRRDGSIPLPAEILAG. Residues 433 to 446 traverse the membrane as a helical segment; that stretch reads GCAGGSQVIFTNPL. Topologically, residues 447–481 are mitochondrial matrix; the sequence is EIVKIRLQVAGEITTGPRVSALNVLQDLGLFGLYK. The chain crosses the membrane as a helical span at residues 482-501; the sequence is GAKACFLRDIPFSAIYFPVY. Residues 502 to 520 lie on the Mitochondrial intermembrane side of the membrane; the sequence is AHCKLLLADENGHVGGINL. The helical transmembrane segment at 521-538 threads the bilayer; it reads LTAGAMAGVPAASLVTPA. The Mitochondrial matrix portion of the chain corresponds to 539–577; that stretch reads DVIKTRLQVAARAGQTTYSGVIDCFRKILREEGPSAFWK. The chain crosses the membrane as a helical span at residues 578–597; the sequence is GTAARVFRSSPQFGVTLVTY. At 598–676 the chain is on the mitochondrial intermembrane side; that stretch reads ELLQRWFYID…AQPKVAAAAQ (79 aa). Residues 612–674 form a C-terminal domain region; the sequence is KPSGSEPTPK…AAAQPKVAAA (63 aa).

The protein belongs to the mitochondrial carrier (TC 2.A.29) family. As to quaternary structure, homodimer (via N-terminus).

Its subcellular location is the mitochondrion inner membrane. It carries out the reaction L-aspartate(in) + L-glutamate(out) + H(+)(out) = L-aspartate(out) + L-glutamate(in) + H(+)(in). The enzyme catalyses 3-sulfino-L-alanine(out) + L-glutamate(in) + H(+)(in) = 3-sulfino-L-alanine(in) + L-glutamate(out) + H(+)(out). It catalyses the reaction 3-sulfino-L-alanine(out) + L-aspartate(in) = 3-sulfino-L-alanine(in) + L-aspartate(out). L-aspartate and 3-sulfino-L-alanine uptake are both inhibited by glisoxepide. In terms of biological role, mitochondrial electrogenic aspartate/glutamate antiporter that favors efflux of aspartate and entry of glutamate and proton within the mitochondria as part of the malate-aspartate shuttle. Also mediates the uptake of L-cysteinesulfinate (3-sulfino-L-alanine) by mitochondria in exchange of L-glutamate and proton. Can also exchange L-cysteinesulfinate with aspartate in their anionic form without any proton translocation. Lacks transport activity towards L-glutamine or gamma-aminobutyric acid (GABA). This chain is Electrogenic aspartate/glutamate antiporter SLC25A12, mitochondrial, found in Rattus norvegicus (Rat).